The following is a 172-amino-acid chain: Secretory-abundant heat soluble protein 64681 (172 aa).

The N-terminal stretch at 1-19 is a signal peptide; it reads MSRTIVALILLGLAALAAA. An SAHS-c1 region spans residues 30-59; that stretch reads EWAGKAWLGKWVSTDRSENWDAFVEALGLP. The segment at 74-102 is SAHS-c2; it reads WKEGDHYHHQIIIADKSYKQDIQFKLGEE. Residues asparagine 108 and asparagine 133 are each glycosylated (N-linked (GlcNAc...) asparagine). The SAHS-c3 stretch occupies residues 115–164; sequence KYTEVGDNLQNEVKIPSKNKTISDSYVVKGDELEKTYKINDVVAKRWYKK.

The protein belongs to the Secretory-abundant heat soluble protein (SAHS) family.

It localises to the secreted. Its function is as follows. Secreted heat soluble protein acting as a molecular shield in water-deficient condition. Tardigrade-specific intrinsically disordered proteins (TDPs) are essential for desiccation tolerance by forming non-crystalline amorphous solids upon desiccation, and this vitrified state mirrors their protective capabilities. This chain is Secretory-abundant heat soluble protein 64681, found in Hypsibius exemplaris (Freshwater tardigrade).